The chain runs to 87 residues: Small ribosomal subunit protein bS20 (87 aa).

The segment at 1-22 (MANSAQARKRARQSLKARAHNA) is disordered. Basic residues predominate over residues 7 to 19 (ARKRARQSLKARA).

This sequence belongs to the bacterial ribosomal protein bS20 family.

In terms of biological role, binds directly to 16S ribosomal RNA. The chain is Small ribosomal subunit protein bS20 from Laribacter hongkongensis (strain HLHK9).